We begin with the raw amino-acid sequence, 476 residues long: Calcium uptake protein 1, mitochondrial (476 aa).

A mitochondrion-targeting transit peptide spans 1-33 (MFRLNSLSALAELAVGSRWYHGGSQPIQIRRRL). Positions 68 to 106 (SDIGDKGKNKDEGDVCNHEKKTADLAPHPEEKKKKRSGF) are disordered. The polybasic region stretch occupies residues 99-110 (KKKKRSGFRDRK). At S122 the chain carries Phosphoserine. Residues 126–129 (KIFR) form a k/R-ring region. An EF-hand 1 domain is found at 218–253 (TPQRNFEIAFKMFDLNGDGEVDMEEFEQVQSIIRSQ). Residues D231, N233, D235, E237, and E242 each contribute to the Ca(2+) site. Residues 259 to 263 (RHRDR) form a k/R-ring region. In terms of domain architecture, EF-hand 2 spans 408 to 443 (LSDHVCDVVFALFDCDGNGELSNKEFVSIMKQRLMR). Residues D421, D423, N425, E427, and E432 each coordinate Ca(2+). Asymmetric dimethylarginine is present on R455. The interval 455–465 (RLMQAMWKCAQ) is C-helix region.

The protein belongs to the MICU1 family. MICU1 subfamily. In terms of assembly, heterodimer; disulfide-linked; heterodimerizes with MICU2 or MICU3. Homodimer; disulfide-linked. Component of the uniplex complex, composed of MCU, EMRE/SMDT1, MICU1 and MICU2 (or MICU3) in a 4:4:1:1 stoichiometry. The composition of calcium sensors within the uniplex complex can differ depending on tissues: a MICU1 homodimer can be present instead of the MICU1-MICU2 heterodimer in skeletal-muscle and kidney. MICU1 is recruited to the uniplex complex by EMRE/SMDT1, and it associates with MCU at low calcium levels, occluding the pore of the MCU channel. Associates with the MICOS complex. Interacts with SLC25A23. Interacts with CHCHD4/MIA40; which introduces the interchain disulfide bond with MICU2. Interacts (when methylated) with UCP2; leading to decrease the calcium sensitivity of MICU1. Post-translationally, phosphorylation at Ser-122 by AKT1 impairs its maturation and stability. In terms of processing, asymmetric dimethylation at Arg-455 by PRMT1 decreases the calcium sensitivity of MICU1 by promoting interaction with UCP2. Degraded by YME1L1 when not complexed as homodimer or heterodimer. Not degraded when complexed as homodimer or heterodimer; the presence of the interchain disulfide bond protecting MICU1 from degradation by YME1L1. As to expression, expressed in epithelial cell lines. Strongly expressed in epidermal keratinocytes and dermal endothelial cells.

It localises to the mitochondrion intermembrane space. It is found in the mitochondrion inner membrane. Activated by spermine, kaempferol and SB202190, which bind MICU1 and prevent MCU pore occlusion in absence of calcium. Calcium sensor of the mitochondrial calcium uniporter (MCU) channel, which senses calcium level via its EF-hand domains. MICU1 and MICU2 (or MICU3) form a disulfide-linked heterodimer that stimulates and inhibits MCU activity, depending on the concentration of calcium. At low calcium levels, MICU1 occludes the pore of the MCU channel, preventing mitochondrial calcium uptake. At higher calcium levels, calcium-binding to MICU1 and MICU2 (or MICU3) induces a conformational change that weakens MCU-MICU1 interactions and moves the MICU1-MICU2 heterodimer away from the pore, allowing calcium permeation through the MCU channel. Also required to protect against manganese toxicity by preventing manganese uptake by MCU: mechanistically, manganese-binding to its EF-hand domains does not induce any conformational change, maintaining MCU pore occlusion. Also acts as a barrier for inhibitors of the MCU channel, such as ruthenium red or its derivative Ru360. Acts as a regulator of mitochondrial cristae structure independently of its ability to regulate the mitochondrial calcium uniporter channel. Regulates glucose-dependent insulin secretion in pancreatic beta-cells by regulating mitochondrial calcium uptake. Induces T-helper 1-mediated autoreactivity, which is accompanied by the release of IFNG. Its function is as follows. Isoform that regulates mitochondrial calcium uniporter (MCU) in the skeletal muscle. Compared to other isoforms, this isoform has higher affinity for calcium, promoting mitochondrial calcium uptake at lower calcium concentrations. This allows a rapid response of mitochondrial metabolism and ensures sustained ATP production needed for resistance and strenuous exercise. The sequence is that of Calcium uptake protein 1, mitochondrial from Homo sapiens (Human).